Consider the following 130-residue polypeptide: HTH-type transcriptional regulator KmtR (130 aa).

An HTH arsR-type domain is found at 10–104; it reads LPDDQVCLVV…DAVFNAEHAG (95 aa). Positions 44 to 67 form a DNA-binding region, H-T-H motif; that stretch reads VNELAEQVGKPAPSVSQHLAKLRM. Positions 110–130 are disordered; it reads HHRAAGGLQSVAKASATKDVG.

Its activity is regulated as follows. Binding to DNA is inhibited by nickel and cobalt ions. Its function is as follows. Represses expression of Rv2025c and its own expression. Acts by binding to the promoter regions. In Mycobacterium tuberculosis (strain ATCC 25618 / H37Rv), this protein is HTH-type transcriptional regulator KmtR (kmtR).